Reading from the N-terminus, the 288-residue chain is Cyclin-dependent kinase 2 homolog (288 aa).

The Protein kinase domain maps to Tyr4 to Phe284. ATP-binding positions include Ile10–Val18 and Lys32. A Phosphothreonine modification is found at Thr14. Phosphotyrosine is present on Tyr15. Asp125 acts as the Proton acceptor in catalysis. Thr158 carries the phosphothreonine modification.

Belongs to the protein kinase superfamily. CMGC Ser/Thr protein kinase family. CDC2/CDKX subfamily. May form a complex composed of at least the catalytic subunit CRK2 and a cyclin. It depends on Mg(2+) as a cofactor.

It localises to the cytoplasm. It catalyses the reaction L-seryl-[protein] + ATP = O-phospho-L-seryl-[protein] + ADP + H(+). It carries out the reaction L-threonyl-[protein] + ATP = O-phospho-L-threonyl-[protein] + ADP + H(+). The catalysed reaction is [DNA-directed RNA polymerase] + ATP = phospho-[DNA-directed RNA polymerase] + ADP + H(+). Phosphorylation at Thr-14 or Tyr-15 inactivates the enzyme, while phosphorylation at Thr-158 activates it. In terms of biological role, serine/threonine-protein kinase. Involved in the control of the cell cycle. Required for entry into S-phase and mitosis. Probable component of the kinase complex that phosphorylates the repetitive C-terminus of RNA polymerase II. In Plasmodium chabaudi chabaudi, this protein is Cyclin-dependent kinase 2 homolog.